A 379-amino-acid polypeptide reads, in one-letter code: 1-deoxy-D-xylulose 5-phosphate reductoisomerase (379 aa).

NADPH contacts are provided by Thr-10, Gly-11, Ser-12, Val-13, and Asn-121. Residue Lys-122 coordinates 1-deoxy-D-xylulose 5-phosphate. NADPH is bound at residue Glu-123. A Mn(2+)-binding site is contributed by Asp-147. Residues Ser-148, Glu-149, Ser-173, and His-196 each coordinate 1-deoxy-D-xylulose 5-phosphate. Glu-149 lines the Mn(2+) pocket. Gly-202 is a binding site for NADPH. The 1-deoxy-D-xylulose 5-phosphate site is built by Ser-209, Asn-214, Lys-215, and Glu-218. Glu-218 is a Mn(2+) binding site.

Belongs to the DXR family. The cofactor is Mg(2+). It depends on Mn(2+) as a cofactor.

It catalyses the reaction 2-C-methyl-D-erythritol 4-phosphate + NADP(+) = 1-deoxy-D-xylulose 5-phosphate + NADPH + H(+). It participates in isoprenoid biosynthesis; isopentenyl diphosphate biosynthesis via DXP pathway; isopentenyl diphosphate from 1-deoxy-D-xylulose 5-phosphate: step 1/6. Functionally, catalyzes the NADPH-dependent rearrangement and reduction of 1-deoxy-D-xylulose-5-phosphate (DXP) to 2-C-methyl-D-erythritol 4-phosphate (MEP). The protein is 1-deoxy-D-xylulose 5-phosphate reductoisomerase of Chlamydia abortus (strain DSM 27085 / S26/3) (Chlamydophila abortus).